The sequence spans 75 residues: Small ribosomal subunit protein bS18 (75 aa).

The protein belongs to the bacterial ribosomal protein bS18 family. Part of the 30S ribosomal subunit. Forms a tight heterodimer with protein bS6.

Binds as a heterodimer with protein bS6 to the central domain of the 16S rRNA, where it helps stabilize the platform of the 30S subunit. The polypeptide is Small ribosomal subunit protein bS18 (Paracoccus denitrificans (strain Pd 1222)).